Reading from the N-terminus, the 559-residue chain is Hepatocyte nuclear factor 1-alpha (559 aa).

The 32-residue stretch at Gly13–Glu44 folds into the HNF-p1 domain. The tract at residues Pro14–Gly43 is dimerization. A compositionally biased stretch (basic and acidic residues) spans Arg49–Gly62. The segment at Arg49–Pro73 is disordered. The POU-specific atypical domain maps to Gln78–His173. 6 interaction with DNA regions span residues Gln121–Glu123, His134–Asn140, Lys146–Lys149, Arg192–Trp195, Arg252–Tyr254, and Asn259–Lys262. A Nuclear localization signal motif is present at residues Arg186–Lys194. Positions Gly188–His268 form a DNA-binding region, homeobox; HNF1-type. Positions Thr492–Gln559 are disordered. The span at Asp499–Leu522 shows a compositional bias: polar residues.

It belongs to the HNF1 homeobox family. Binds DNA as a dimer. As to expression, expressed in liver, intestine, spleen and kidney.

Its subcellular location is the nucleus. In terms of biological role, transcriptional activator that regulates the tissue specific expression of multiple genes, especially in pancreas and liver. Binds to the promoter of the albumin gene. The chain is Hepatocyte nuclear factor 1-alpha (hnf1a) from Salmo salar (Atlantic salmon).